The sequence spans 24 residues: Coenzyme PQQ synthesis protein A (24 aa).

Residues 16-20 (EITMY) constitute a cross-link (pyrroloquinoline quinone (Glu-Tyr)).

The protein belongs to the PqqA family.

It functions in the pathway cofactor biosynthesis; pyrroloquinoline quinone biosynthesis. Functionally, required for coenzyme pyrroloquinoline quinone (PQQ) biosynthesis. PQQ is probably formed by cross-linking a specific glutamate to a specific tyrosine residue and excising these residues from the peptide. This Burkholderia cenocepacia (strain ATCC BAA-245 / DSM 16553 / LMG 16656 / NCTC 13227 / J2315 / CF5610) (Burkholderia cepacia (strain J2315)) protein is Coenzyme PQQ synthesis protein A.